The sequence spans 347 residues: Phenylalanine--tRNA ligase alpha subunit (347 aa).

E261 provides a ligand contact to Mg(2+).

Belongs to the class-II aminoacyl-tRNA synthetase family. Phe-tRNA synthetase alpha subunit type 1 subfamily. Tetramer of two alpha and two beta subunits. Requires Mg(2+) as cofactor.

Its subcellular location is the cytoplasm. It catalyses the reaction tRNA(Phe) + L-phenylalanine + ATP = L-phenylalanyl-tRNA(Phe) + AMP + diphosphate + H(+). The chain is Phenylalanine--tRNA ligase alpha subunit from Streptococcus equi subsp. zooepidemicus (strain MGCS10565).